The sequence spans 218 residues: Large ribosomal subunit protein uL16 (218 aa).

It belongs to the universal ribosomal protein uL16 family. Component of the large ribosomal subunit. Mature ribosomes consist of a small (40S) and a large (60S) subunit. The 40S subunit contains about 33 different proteins and 1 molecule of RNA (18S). The 60S subunit contains about 49 different proteins and 3 molecules of RNA (28S, 5.8S and 5S).

This is Large ribosomal subunit protein uL16 (RpL10) from Drosophila melanogaster (Fruit fly).